A 433-amino-acid chain; its full sequence is 3-phosphoshikimate 1-carboxyvinyltransferase (433 aa).

Residues Lys22, Ser23, and Arg27 each coordinate 3-phosphoshikimate. A phosphoenolpyruvate-binding site is contributed by Lys22. Phosphoenolpyruvate is bound by residues Gly94 and Arg122. Residues Ser168, Ser169, Gln170, Ser196, Asp319, and Lys346 each coordinate 3-phosphoshikimate. Gln170 is a phosphoenolpyruvate binding site. Asp319 (proton acceptor) is an active-site residue. Residues Arg350, Arg394, and Lys418 each contribute to the phosphoenolpyruvate site.

Belongs to the EPSP synthase family. In terms of assembly, monomer.

It localises to the cytoplasm. The catalysed reaction is 3-phosphoshikimate + phosphoenolpyruvate = 5-O-(1-carboxyvinyl)-3-phosphoshikimate + phosphate. It participates in metabolic intermediate biosynthesis; chorismate biosynthesis; chorismate from D-erythrose 4-phosphate and phosphoenolpyruvate: step 6/7. In terms of biological role, catalyzes the transfer of the enolpyruvyl moiety of phosphoenolpyruvate (PEP) to the 5-hydroxyl of shikimate-3-phosphate (S3P) to produce enolpyruvyl shikimate-3-phosphate and inorganic phosphate. The polypeptide is 3-phosphoshikimate 1-carboxyvinyltransferase (Nitrosomonas eutropha (strain DSM 101675 / C91 / Nm57)).